A 1113-amino-acid polypeptide reads, in one-letter code: Potassium channel subfamily U member 1 (1113 aa).

Residues 1–24 are Extracellular-facing; it reads MSQTLLDNLNKKELTETSCTIEIQ. Residues 25 to 45 form a helical membrane-spanning segment; it reads AAFILSSLATFFGGLIVLFIF. Residues 46-101 are Cytoplasmic-facing; that stretch reads RIALKISRNWKTVKGPRGILELFSSRRIEVNPLRKLYFHGVFRERIEMLLSAQTIV. A helical membrane pass occupies residues 102–122; that stretch reads GQVLVILVFVLSIGSLVIYFI. Residues 123 to 137 lie on the Extracellular side of the membrane; the sequence is NSMDPVRKCSSYEDK. The chain crosses the membrane as a helical span at residues 138–158; it reads IVHVDLSFNAFFSFYFGLRFW. Over 159–165 the chain is Cytoplasmic; that stretch reads AAEDKIK. A helical membrane pass occupies residues 166–186; that stretch reads FWLEMNSIVDIFTIPPTFISY. Topologically, residues 187–188 are extracellular; the sequence is YL. A helical; Voltage-sensor membrane pass occupies residues 189–209; that stretch reads KSNWLGLRFLRALRLLELPKI. Topologically, residues 210–226 are cytoplasmic; sequence LQILQVIKTSNSVKLSK. A helical transmembrane segment spans residues 227 to 247; the sequence is LMSIVISTWFTAAGFLHLVEN. The Extracellular segment spans residues 248-259; it reads SGDPWLNGRNSQ. Positions 260 to 282 form an intramembrane region, pore-forming; sequence TMSYFESIYLVTATMSTVGFGDV. The Extracellular segment spans residues 283–290; the sequence is VAKTSLGR. The chain crosses the membrane as a helical span at residues 291–311; it reads IFIVFFTLGSLILFANYIPEM. The Cytoplasmic portion of the chain corresponds to 312-1113; sequence VELFSTRKKY…FDASDIDPGK (802 aa). RCK N-terminal domains lie at 331 to 473 and 710 to 881; these read KKFI…DNII and QNHI…DEAI. A compositionally biased stretch (polar residues) spans 1047–1081; it reads ASIQDQDTTTNVTSMSQGSNFQGAQSALNEHSLSP. The tract at residues 1047 to 1091 is disordered; it reads ASIQDQDTTTNVTSMSQGSNFQGAQSALNEHSLSPASAMGEKKSP.

This sequence belongs to the potassium channel family. Calcium-activated (TC 1.A.1.3) subfamily. KCa1.1/KCNMA1 sub-subfamily. In terms of assembly, homotetramer; which constitutes the activated potassium channel. Interacts with LRRC52; this interaction changes channel gating properties, such as shifting gating to more negative potentials at a given pH.

It localises to the cell membrane. The protein localises to the cell projection. Its subcellular location is the cilium. It is found in the flagellum membrane. The enzyme catalyses K(+)(in) = K(+)(out). With respect to regulation, regulated by changes in cytosolic pH; activated by alkalization. Not activated by intracellular Ca(2+). VU0546110 acts as a selective inhibitor. The auxiliary subunit LRRC52 shifts the activation of KCNU1 to more negative potentials at a given pH. In terms of biological role, testis-specific potassium channel activated by both intracellular pH and membrane voltage that mediates export of K(+). Represents the primary spermatozoan K(+) current. The channel underlies a pH-triggered membrane hyperpolarization during the process of sperm capacitation, as sperm encounter the alkaline environment near the ovum in the female reproductive tract, thereby playing an essential for male fertility. The polypeptide is Potassium channel subfamily U member 1 (Kcnu1) (Rattus norvegicus (Rat)).